The following is a 318-amino-acid chain: D-alanine--D-alanine ligase B (318 aa).

Positions 116–311 constitute an ATP-grasp domain; the sequence is KQVWQSLGIP…FQQLVLAILA (196 aa). Residue 142–197 participates in ATP binding; sequence STELGFPLIVKPAHEGSSIGMAKVNSTQELVAAWQDAAKYDSQVLVEQWIHGPEFT. Positions 265, 278, and 280 each coordinate Mg(2+).

This sequence belongs to the D-alanine--D-alanine ligase family. Requires Mg(2+) as cofactor. It depends on Mn(2+) as a cofactor.

The protein resides in the cytoplasm. It carries out the reaction 2 D-alanine + ATP = D-alanyl-D-alanine + ADP + phosphate + H(+). The protein operates within cell wall biogenesis; peptidoglycan biosynthesis. Cell wall formation. This Pseudomonas putida (strain ATCC 47054 / DSM 6125 / CFBP 8728 / NCIMB 11950 / KT2440) protein is D-alanine--D-alanine ligase B.